Consider the following 544-residue polypeptide: pH-responsive protein 2 (544 aa).

A signal peptide spans 1-22; the sequence is MLLKSLFPSILAATSFVSSVAA. Residues Asn40 and Asn59 are each glycosylated (N-linked (GlcNAc...) asparagine). Cysteines 72 and 101 form a disulfide. Residue Asn147 is glycosylated (N-linked (GlcNAc...) asparagine). Disulfide bonds link Cys214/Cys347, Cys232/Cys263, Cys369/Cys420, Cys378/Cys444, and Cys397/Cys402. Asn408 carries N-linked (GlcNAc...) asparagine glycosylation. A disordered region spans residues 469-514; sequence GSSGLGTVSGTVRTDTSQSTSDSGSGSSSSSSSSSSSSSSGSSGSK. A lipid anchor (GPI-anchor amidated serine) is attached at Ser515. Residues 516–544 constitute a propeptide, removed in mature form; it reads AASIVSVNLLTKIATIGISIVVGFGLITM.

The protein belongs to the glycosyl hydrolase 72 family.

It localises to the cell membrane. Its function is as follows. Required for apical cell growth and plays an essential role in morphogenesis. May be integral to the pathogenic ability of the organism. This chain is pH-responsive protein 2 (PHR2), found in Candida albicans (strain SC5314 / ATCC MYA-2876) (Yeast).